The primary structure comprises 515 residues: GMP synthase [glutamine-hydrolyzing] (515 aa).

The Glutamine amidotransferase type-1 domain maps to 10–200; that stretch reads TIIVLDFGSQ…VFGVCGCSEG (191 aa). Cys87 (nucleophile) is an active-site residue. Catalysis depends on residues His174 and Glu176. A GMPS ATP-PPase domain is found at 201 to 390; the sequence is WNMENFIEVE…LGIPDEIVWR (190 aa). 228 to 234 contributes to the ATP binding site; it reads SGGVDSS.

Homodimer.

The enzyme catalyses XMP + L-glutamine + ATP + H2O = GMP + L-glutamate + AMP + diphosphate + 2 H(+). The protein operates within purine metabolism; GMP biosynthesis; GMP from XMP (L-Gln route): step 1/1. Functionally, catalyzes the synthesis of GMP from XMP. The polypeptide is GMP synthase [glutamine-hydrolyzing] (Bacillus thuringiensis subsp. konkukian (strain 97-27)).